The sequence spans 223 residues: N-(5'-phosphoribosyl)anthranilate isomerase (223 aa).

Belongs to the TrpF family.

It catalyses the reaction N-(5-phospho-beta-D-ribosyl)anthranilate = 1-(2-carboxyphenylamino)-1-deoxy-D-ribulose 5-phosphate. It functions in the pathway amino-acid biosynthesis; L-tryptophan biosynthesis; L-tryptophan from chorismate: step 3/5. This Bradyrhizobium diazoefficiens (strain JCM 10833 / BCRC 13528 / IAM 13628 / NBRC 14792 / USDA 110) protein is N-(5'-phosphoribosyl)anthranilate isomerase.